Consider the following 191-residue polypeptide: Peptidyl-tRNA hydrolase (191 aa).

Residue tyrosine 14 participates in tRNA binding. Histidine 19 acts as the Proton acceptor in catalysis. Residues phenylalanine 64, asparagine 66, and asparagine 112 each contribute to the tRNA site.

Belongs to the PTH family. As to quaternary structure, monomer.

It localises to the cytoplasm. The catalysed reaction is an N-acyl-L-alpha-aminoacyl-tRNA + H2O = an N-acyl-L-amino acid + a tRNA + H(+). Hydrolyzes ribosome-free peptidyl-tRNAs (with 1 or more amino acids incorporated), which drop off the ribosome during protein synthesis, or as a result of ribosome stalling. Its function is as follows. Catalyzes the release of premature peptidyl moieties from peptidyl-tRNA molecules trapped in stalled 50S ribosomal subunits, and thus maintains levels of free tRNAs and 50S ribosomes. The polypeptide is Peptidyl-tRNA hydrolase (Novosphingobium aromaticivorans (strain ATCC 700278 / DSM 12444 / CCUG 56034 / CIP 105152 / NBRC 16084 / F199)).